We begin with the raw amino-acid sequence, 149 residues long: UPF0178 protein CPR_2251 (149 aa).

Belongs to the UPF0178 family.

This is UPF0178 protein CPR_2251 from Clostridium perfringens (strain SM101 / Type A).